Consider the following 506-residue polypeptide: Probable cytosol aminopeptidase (506 aa).

Residues lysine 270 and aspartate 275 each contribute to the Mn(2+) site. Lysine 282 is an active-site residue. Positions 293, 352, and 354 each coordinate Mn(2+). The active site involves arginine 356.

Belongs to the peptidase M17 family. Requires Mn(2+) as cofactor.

It localises to the cytoplasm. It catalyses the reaction Release of an N-terminal amino acid, Xaa-|-Yaa-, in which Xaa is preferably Leu, but may be other amino acids including Pro although not Arg or Lys, and Yaa may be Pro. Amino acid amides and methyl esters are also readily hydrolyzed, but rates on arylamides are exceedingly low.. It carries out the reaction Release of an N-terminal amino acid, preferentially leucine, but not glutamic or aspartic acids.. In terms of biological role, presumably involved in the processing and regular turnover of intracellular proteins. Catalyzes the removal of unsubstituted N-terminal amino acids from various peptides. The protein is Probable cytosol aminopeptidase of Photorhabdus laumondii subsp. laumondii (strain DSM 15139 / CIP 105565 / TT01) (Photorhabdus luminescens subsp. laumondii).